The primary structure comprises 406 residues: Argininosuccinate synthase (406 aa).

8–16 (AYSGGLDTS) is a binding site for ATP. Tyrosine 86 serves as a coordination point for L-citrulline. Glycine 116 is an ATP binding site. Threonine 118, asparagine 122, and aspartate 123 together coordinate L-aspartate. Asparagine 122 is a binding site for L-citrulline. Positions 126, 174, 259, and 271 each coordinate L-citrulline.

This sequence belongs to the argininosuccinate synthase family. Type 1 subfamily. In terms of assembly, homotetramer.

It is found in the cytoplasm. It catalyses the reaction L-citrulline + L-aspartate + ATP = 2-(N(omega)-L-arginino)succinate + AMP + diphosphate + H(+). It functions in the pathway amino-acid biosynthesis; L-arginine biosynthesis; L-arginine from L-ornithine and carbamoyl phosphate: step 2/3. The protein is Argininosuccinate synthase of Lacticaseibacillus paracasei (strain ATCC 334 / BCRC 17002 / CCUG 31169 / CIP 107868 / KCTC 3260 / NRRL B-441) (Lactobacillus paracasei).